A 165-amino-acid chain; its full sequence is Hydroxyproline-rich systemin A (165 aa).

Residues 1–18 form the signal peptide; the sequence is MRVLFLIYLILSPFGAEA. Residues 19 to 35 constitute a propeptide that is removed on maturation; it reads RTLLENHEGLNVGSGYG. 2 disordered regions span residues 33–70 and 142–165; these read GYGR…TSEN and YWNR…LHSY. A 4-hydroxyproline mark is found at Pro42, Pro43, Pro45, Pro49, and Pro50. O-linked (Ara...) hydroxyproline glycosylation is found at Pro42, Pro43, Pro45, Pro49, and Pro50. Residues 54 to 143 constitute a propeptide that is removed on maturation; sequence VSNSVSPTRT…FDSKSDERYW (90 aa). 4-hydroxyproline is present on residues Pro150, Pro151, and Pro153. O-linked (Ara...) hydroxyproline glycans are attached at residues Pro150, Pro151, and Pro153. A propeptide spanning residues 162–165 is cleaved from the precursor; that stretch reads LHSY.

In terms of processing, O-glycosylated; contains pentose side chains. Expressed in leaves.

The protein resides in the secreted. Activates a lipid-based signal transduction pathway in which linolenic acid is converted to jasmonic acid, a potent activator of defense gene transcription, including proteinase inhibitors. The chain is Hydroxyproline-rich systemin A from Nicotiana tabacum (Common tobacco).